A 113-amino-acid polypeptide reads, in one-letter code: Large ribosomal subunit protein bL17 (113 aa).

This sequence belongs to the bacterial ribosomal protein bL17 family. Part of the 50S ribosomal subunit. Contacts protein L32.

The polypeptide is Large ribosomal subunit protein bL17 (Caldicellulosiruptor saccharolyticus (strain ATCC 43494 / DSM 8903 / Tp8T 6331)).